The primary structure comprises 605 residues: Pyruvate decarboxylase 1 (605 aa).

Substrate is bound by residues D67 and H154. Positions 432–514 (DSWFNCQKLR…FLINNGGYTI (83 aa)) are thiamine pyrophosphate binding. Mg(2+) contacts are provided by D482, N509, and G511. Position 515 (E515) interacts with substrate.

This sequence belongs to the TPP enzyme family. As to quaternary structure, homotetramer. The cofactor is a metal cation. Thiamine diphosphate is required as a cofactor.

It catalyses the reaction a 2-oxocarboxylate + H(+) = an aldehyde + CO2. The protein is Pyruvate decarboxylase 1 (PDC1) of Oryza sativa subsp. indica (Rice).